The sequence spans 357 residues: Cinnamyl alcohol dehydrogenase 5 (357 aa).

A Zn(2+)-binding site is contributed by C47. Residue T49 coordinates NADP(+). Zn(2+)-binding residues include H69, E70, C100, C103, C106, C114, and C163. NADP(+)-binding positions include T167, 188–193, 211–216, T251, G275, and 298–300; these read GLGGVG, SSSNKK, and SFI.

The protein belongs to the zinc-containing alcohol dehydrogenase family. As to quaternary structure, homodimer. It depends on Zn(2+) as a cofactor. As to expression, expressed at the lateral root initiation sites, in the vascular tissues of the primary lateral root and the root caps. Expressed in the hypocotyl, cotyledon and leaf veins, apical meristem region, at the base of the trichomes, hydathodes and cauline leaves. In stems, expressed in the cells associated with the vascular cambium, interfascicular cambium and the developing xylem. Expressed in the vascular strand of petals and sepals, anthers, stamen filaments, stigma in flowers, and abscission, style and stigmatic regions of siliques.

The catalysed reaction is (E)-cinnamyl alcohol + NADP(+) = (E)-cinnamaldehyde + NADPH + H(+). It catalyses the reaction (E)-coniferol + NADP(+) = (E)-coniferaldehyde + NADPH + H(+). It carries out the reaction (E)-sinapyl alcohol + NADP(+) = (E)-sinapaldehyde + NADPH + H(+). The enzyme catalyses (E)-4-coumaroyl alcohol + NADP(+) = (E)-4-coumaraldehyde + NADPH + H(+). The catalysed reaction is (E)-caffeyl alcohol + NADP(+) = (E)-caffeyl aldehyde + NADPH + H(+). It participates in aromatic compound metabolism; phenylpropanoid biosynthesis. In terms of biological role, involved in lignin biosynthesis in the floral stem. Catalyzes the final step specific for the production of lignin monomers. Catalyzes the NADPH-dependent reduction of coniferaldehyde, 5-hydroxyconiferaldehyde, sinapaldehyde, 4-coumaraldehyde and caffeyl aldehyde to their respective alcohols. The chain is Cinnamyl alcohol dehydrogenase 5 from Arabidopsis thaliana (Mouse-ear cress).